Consider the following 157-residue polypeptide: DNA gyrase inhibitor (157 aa).

It belongs to the DNA gyrase inhibitor family. Interacts with DNA gyrase.

It is found in the cytoplasm. Its function is as follows. Inhibits the supercoiling activity of DNA gyrase. Acts by inhibiting DNA gyrase at an early step, prior to (or at the step of) binding of DNA by the gyrase. It protects cells against toxins that target DNA gyrase, by inhibiting activity of these toxins and reducing the formation of lethal double-strand breaks in the cell. In Shigella boydii serotype 18 (strain CDC 3083-94 / BS512), this protein is DNA gyrase inhibitor.